The following is a 167-amino-acid chain: Peptide deformylase (167 aa).

The Fe cation site is built by Cys91 and His133. Glu134 is an active-site residue. His137 is a binding site for Fe cation.

This sequence belongs to the polypeptide deformylase family. Fe(2+) serves as cofactor.

It catalyses the reaction N-terminal N-formyl-L-methionyl-[peptide] + H2O = N-terminal L-methionyl-[peptide] + formate. Its function is as follows. Removes the formyl group from the N-terminal Met of newly synthesized proteins. Requires at least a dipeptide for an efficient rate of reaction. N-terminal L-methionine is a prerequisite for activity but the enzyme has broad specificity at other positions. The sequence is that of Peptide deformylase from Pseudoalteromonas translucida (strain TAC 125).